We begin with the raw amino-acid sequence, 716 residues long: Zinc finger protein on ecdysone puffs (716 aa).

Disordered stretches follow at residues 103-168 (PSLL…GGIR) and 182-208 (KNANQNKKKEPTPGEKKIESPTKESPY). Residues 188–203 (KKKEPTPGEKKIESPT) are compositionally biased toward basic and acidic residues. Phosphoserine is present on serine 201. At threonine 203 the chain carries Phosphothreonine. At serine 206 the chain carries Phosphoserine. The C2H2-type 1 zinc finger occupies 216–240 (FYCHLCKKHMWDANSFENHIKGRTH). The C2H2-type 2; atypical zinc finger occupies 288 to 310 (DYCTMCDLNFHGHISTHRKSEGH). The C2H2-type 3 zinc-finger motif lies at 319-343 (PKCIECNKEFATRIDYDTHLLSAEH). Residues 350-359 (NNTKVGERKR) show a composition bias toward basic and acidic residues. The interval 350-447 (NNTKVGERKR…EEEEVALPVD (98 aa)) is disordered. Positions 379–383 (KRKKK) match the Nuclear localization signal motif. The span at 386–401 (KKEGEAADGEAKKEGA) shows a compositional bias: basic and acidic residues. Residues 405–414 (EGAEGDEAEG) show a composition bias toward acidic residues. Basic and acidic residues predominate over residues 415 to 431 (EEAKEGEEAADETKEGD). Residues 432–447 (ELNESQEEEEVALPVD) are compositionally biased toward acidic residues. A C2H2-type 4 zinc finger spans residues 489-513 (YECSVCSKFFDTEVTAEIHSRTATH). The segment at 534-716 (RAAAALEENE…QRARGRYNRY (183 aa)) is disordered. Residues 541–551 (ENERKKRKVEE) are compositionally biased toward basic and acidic residues. The Nuclear localization signal signature appears at 544–548 (RKKRK). Acidic residues predominate over residues 560–638 (AAEETTEGAE…GQEGEQEPEP (79 aa)). The segment covering 639-656 (EPAPVQTPAPAEPAPPAK) has biased composition (pro residues). Positions 657–704 (TPAKTPTKAAAPAAVASPAAAATSADASPSPAKKATPARAAAGAKATP) are enriched in low complexity. Serine 673, serine 684, and serine 686 each carry phosphoserine. Residue threonine 692 is modified to Phosphothreonine. A compositionally biased stretch (basic residues) spans 707-716 (QRARGRYNRY).

Its subcellular location is the nucleus. It is found in the chromosome. May play a role in the process of early and late gene activation, or possibly in RNA processing, for a defined set of developmentally regulated loci. In Drosophila melanogaster (Fruit fly), this protein is Zinc finger protein on ecdysone puffs (Pep).